The sequence spans 280 residues: RAD52 motif-containing protein 1 (280 aa).

The 84-residue stretch at 18–101 (KTIFIWDIQP…SPLKVRLSTK (84 aa)) folds into the RRM domain.

In terms of assembly, homodimer.

The protein resides in the nucleus. Its subcellular location is the cytoplasm. It localises to the nucleolus. Functionally, may confer resistance to the antitumor agent cisplatin. Binds to DNA and RNA. The chain is RAD52 motif-containing protein 1 (rdm1) from Danio rerio (Zebrafish).